We begin with the raw amino-acid sequence, 322 residues long: Transaldolase (322 aa).

Lysine 136 functions as the Schiff-base intermediate with substrate in the catalytic mechanism.

Belongs to the transaldolase family. Type 1 subfamily. As to quaternary structure, homodimer.

It is found in the cytoplasm. The enzyme catalyses D-sedoheptulose 7-phosphate + D-glyceraldehyde 3-phosphate = D-erythrose 4-phosphate + beta-D-fructose 6-phosphate. It functions in the pathway carbohydrate degradation; pentose phosphate pathway; D-glyceraldehyde 3-phosphate and beta-D-fructose 6-phosphate from D-ribose 5-phosphate and D-xylulose 5-phosphate (non-oxidative stage): step 2/3. Functionally, transaldolase is important for the balance of metabolites in the pentose-phosphate pathway. This chain is Transaldolase, found in Xanthomonas campestris pv. campestris (strain B100).